We begin with the raw amino-acid sequence, 476 residues long: Protein transport protein Sec61 subunit alpha-like 2 (476 aa).

Residues 2–33 (AIKFLEVIKPFCAVLPEIQKPERRIQFKEKVL) lie on the Cytoplasmic side of the membrane. The helical transmembrane segment at 34-53 (WTAITLFIFLVCCQIPLFGI) threads the bilayer. Residues 54 to 76 (MSSDSADPFYWMRVIMASNRGTL) lie on the Lumenal side of the membrane. Residues 77–96 (MELGISPIVTSGLIMQLLAG) form a helical membrane-spanning segment. The Cytoplasmic segment spans residues 97 to 117 (AKIIEVGDTPKDRALFNGAQK). The helical transmembrane segment at 118–138 (LFGMIITIGQAVVYVMTGMYG) threads the bilayer. Residues 139–144 (DPSEMG) lie on the Lumenal side of the membrane. A helical transmembrane segment spans residues 145 to 165 (AGICLLIIIQLFVAGLIVLLL). Over 166-172 (DELLQKG) the chain is Cytoplasmic. Residues 173 to 193 (YGLGSGISLFIATNICETIVW) form a helical membrane-spanning segment. Topologically, residues 194-240 (KAFSPTTVNTGRGTEFEGAIIALFHLLATRTDKVRALREAFYRQNLP) are lumenal. A helical membrane pass occupies residues 241–261 (NLMNLIATIFVFAVVIYFQGF). Topologically, residues 262–288 (RVDLPIKSARYRGQYNTYPIKLFYTSN) are cytoplasmic. The chain crosses the membrane as a helical span at residues 289–309 (IPIILQSALVSNLYVISQMLS). Over 310–354 (TRFSGNFLVNLLGTWSDTSTGGPARAYPVGGLCYYLSPPESFGTV) the chain is Lumenal. Residues 355–375 (LEDPIHAIIYIIFMLGSCAFF) form a helical membrane-spanning segment. Over 376–420 (SKTWIEVSGSSAKDVAKQLKEQQMVMRGHRETSMVHELNRYIPTA) the chain is Cytoplasmic. A helical transmembrane segment spans residues 421–441 (AAFGGLCIGGLSVMADFLGAI). At 442-445 (GSGT) the chain is on the lumenal side. Residues 446–462 (GILLAVTIIYQYFEIFV) traverse the membrane as a helical segment. The Cytoplasmic portion of the chain corresponds to 463–476 (KEQSEVGSVGALLF).

The protein belongs to the SecY/SEC61-alpha family. As to quaternary structure, the SEC61 channel-forming translocon complex consists of channel-forming core components SEC61A1, SEC61B and SEC61G and different auxiliary components such as SEC62 and SEC63.

It localises to the endoplasmic reticulum membrane. Its function is as follows. Component of SEC61 channel-forming translocon complex that mediates transport of signal peptide-containing precursor polypeptides across the endoplasmic reticulum (ER). Forms a ribosome receptor and a gated pore in the ER membrane, both functions required for cotranslational translocation of nascent polypeptides. This is Protein transport protein Sec61 subunit alpha-like 2 (sec61al2) from Danio rerio (Zebrafish).